We begin with the raw amino-acid sequence, 184 residues long: Lactoylglutathione lyase (184 aa).

An N-acetylalanine modification is found at Ala-2. A disulfide bridge connects residues Cys-19 and Cys-20. Residues 31 to 177 (LLQQTMLRIK…DGYWIEILNP (147 aa)) enclose the VOC domain. Substrate-binding residues include Gln-34 and Arg-38. Zn(2+) is bound at residue Gln-34. Lys-88 carries the N6-succinyllysine modification. Glu-100 is a Zn(2+) binding site. Asn-104 contacts substrate. Phosphothreonine is present on Thr-107. Substrate is bound by residues Arg-123 and His-127. Position 127 (His-127) interacts with Zn(2+). The residue at position 139 (Cys-139) is an S-glutathionyl cysteine. An N6-acetyllysine; alternate modification is found at Lys-148. An N6-succinyllysine; alternate modification is found at Lys-148. 157-158 (KM) contacts substrate. Glu-173 is a binding site for Zn(2+). Glu-173 serves as the catalytic Proton donor/acceptor.

It belongs to the glyoxalase I family. Homodimer. Zn(2+) serves as cofactor. In terms of processing, glutathionylation at Cys-139 inhibits enzyme activity. Post-translationally, phosphorylated at Thr-107 in the presence of CaMK2. However, this is a consensus site for phosphorylation by CK2 so phosphorylation may be mediated by CK2 rather than CaMK2. Phosphorylation is induced by TNF and suppresses the TNF-induced transcriptional activity of NF-kappa-B. Exists in a nitric oxide (NO)-modified form. The exact nature of the modification is unknown, but it suppresses the TNF-induced transcriptional activity of NF-kappa-B.

It carries out the reaction (R)-S-lactoylglutathione = methylglyoxal + glutathione. Its pathway is secondary metabolite metabolism; methylglyoxal degradation; (R)-lactate from methylglyoxal: step 1/2. Subject to competitive inhibition by methyl-gerfelin. Catalyzes the conversion of hemimercaptal, formed from methylglyoxal and glutathione, to S-lactoylglutathione. Involved in the regulation of TNF-induced transcriptional activity of NF-kappa-B. Required for normal osteoclastogenesis. This chain is Lactoylglutathione lyase (Glo1), found in Mus musculus (Mouse).